A 248-amino-acid chain; its full sequence is MYKLVLIRHGESTWNLENRFTGWVDVDLTETGADQARQAGKLLKDAGLGFDVAYTSVLKRAIRTLWHVQDEMDLMWIPVRNEWRLNERHYGALAGLNKAETAAKFGDEQVLVWRRSYDTPPPALEPTDPRASYDDPRYANVPRNEIPLTECLKDTVARVMPLWNESIAPDIQSGKRVVIAAHGNSIRALVKYLDQISDDDIVGLNIPNGTPLVYELDADLRPLRHYYLGDQDAIAASLAAVASQGKAR.

Residues 8–15 (RHGESTWN), 21–22 (TG), arginine 60, 87–90 (ERHY), lysine 98, and 114–115 (RR) contribute to the substrate site. Residue histidine 9 is the Tele-phosphohistidine intermediate of the active site. Glutamate 87 functions as the Proton donor/acceptor in the catalytic mechanism. The segment at 118–137 (DTPPPALEPTDPRASYDDPR) is disordered. Residues 127–137 (TDPRASYDDPR) show a composition bias toward basic and acidic residues. Residue 183-184 (GN) participates in substrate binding.

Belongs to the phosphoglycerate mutase family. BPG-dependent PGAM subfamily. As to quaternary structure, homodimer.

The catalysed reaction is (2R)-2-phosphoglycerate = (2R)-3-phosphoglycerate. It functions in the pathway carbohydrate degradation; glycolysis; pyruvate from D-glyceraldehyde 3-phosphate: step 3/5. Catalyzes the interconversion of 2-phosphoglycerate and 3-phosphoglycerate. The polypeptide is 2,3-bisphosphoglycerate-dependent phosphoglycerate mutase (Cupriavidus necator (strain ATCC 17699 / DSM 428 / KCTC 22496 / NCIMB 10442 / H16 / Stanier 337) (Ralstonia eutropha)).